A 104-amino-acid polypeptide reads, in one-letter code: EPLCRRQFQQHQHLRACQRYLRRRAQRGGLADEQRGPALRLCCNQLRQVNKPCVCPVLRQAAHQQLYQGQIEGPRQVRRLFRAARNLPNICKIPAVGRCQFTRW.

4 cysteine pairs are disulfide-bonded: C4–C53, C17–C42, C43–C91, and C55–C99.

Belongs to the 2S seed storage albumins family. In terms of assembly, heterodimer of a small A and a large B chain linked by disulfide bonds.

Its function is as follows. Heat stable 2S seed storage protein having sweetness-inducing activity. This is Sweet protein mabinlin-3 from Capparis masaikai (Mabinlang).